We begin with the raw amino-acid sequence, 628 residues long: Kelch-like protein 14 (628 aa).

A BTB domain is found at 33-151; sequence CDVTLTAQGQ…LYTANVTLSL (119 aa). Positions 69–115 are disordered; the sequence is GGGVGGQDGLGAPKDQQQPPQQQPSQQQQPPPQEEPGTPSSSPDDKL. The span at 84–96 shows a compositional bias: low complexity; the sequence is QQQPPQQQPSQQQ. Residues 210 to 279 form the BACK domain; the sequence is VEDVLLLNFE…PAPELVERVQ (70 aa). 6 Kelch repeats span residues 323-372, 373-424, 425-471, 473-518, 520-570, and 572-620; these read MLLL…EVEN, FLFV…RLDK, HLYV…VHNG, IYIS…VMND, LYAI…VLDD, and IYLV…TVIL.

As to quaternary structure, interacts with TOR1A, preferentially with the ATP-free form.

It is found in the cytoplasm. Its subcellular location is the cytosol. It localises to the endoplasmic reticulum membrane. This chain is Kelch-like protein 14 (KLHL14), found in Homo sapiens (Human).